The primary structure comprises 947 residues: Valine--tRNA ligase (947 aa).

The short motif at 45–55 (PNVTGSLHMGH) is the 'HIGH' region element. The short motif at 591–595 (KMSKS) is the 'KMSKS' region element. Lys-594 contacts ATP. A coiled-coil region spans residues 879-943 (DLAAEQARLE…ASLRTALTRV (65 aa)).

Belongs to the class-I aminoacyl-tRNA synthetase family. ValS type 1 subfamily. In terms of assembly, monomer.

The protein resides in the cytoplasm. The catalysed reaction is tRNA(Val) + L-valine + ATP = L-valyl-tRNA(Val) + AMP + diphosphate. Functionally, catalyzes the attachment of valine to tRNA(Val). As ValRS can inadvertently accommodate and process structurally similar amino acids such as threonine, to avoid such errors, it has a 'posttransfer' editing activity that hydrolyzes mischarged Thr-tRNA(Val) in a tRNA-dependent manner. In Agrobacterium fabrum (strain C58 / ATCC 33970) (Agrobacterium tumefaciens (strain C58)), this protein is Valine--tRNA ligase.